A 361-amino-acid polypeptide reads, in one-letter code: 3-dehydroquinate synthase (361 aa).

NAD(+) is bound by residues 71–76 (DGEQYK), 105–109 (GVIGD), 129–130 (TT), Lys-142, and Lys-151. The Zn(2+) site is built by Glu-184, His-247, and His-264.

This sequence belongs to the sugar phosphate cyclases superfamily. Dehydroquinate synthase family. It depends on Co(2+) as a cofactor. The cofactor is Zn(2+). NAD(+) is required as a cofactor.

It is found in the cytoplasm. The catalysed reaction is 7-phospho-2-dehydro-3-deoxy-D-arabino-heptonate = 3-dehydroquinate + phosphate. Its pathway is metabolic intermediate biosynthesis; chorismate biosynthesis; chorismate from D-erythrose 4-phosphate and phosphoenolpyruvate: step 2/7. Catalyzes the conversion of 3-deoxy-D-arabino-heptulosonate 7-phosphate (DAHP) to dehydroquinate (DHQ). This is 3-dehydroquinate synthase from Pectobacterium atrosepticum (strain SCRI 1043 / ATCC BAA-672) (Erwinia carotovora subsp. atroseptica).